A 72-amino-acid chain; its full sequence is Large ribosomal subunit protein uL29 (72 aa).

It belongs to the universal ribosomal protein uL29 family.

This chain is Large ribosomal subunit protein uL29, found in Microcystis aeruginosa (strain NIES-843 / IAM M-2473).